A 355-amino-acid chain; its full sequence is Phytoene synthase (355 aa).

It belongs to the phytoene/squalene synthase family. The cofactor is ATP. Mn(2+) is required as a cofactor. Mg(2+) serves as cofactor.

The protein operates within carotenoid biosynthesis; phytoene biosynthesis. Involved in the biosynthesis of carotenoids. Catalyzes the condensation of two molecules of geranylgeranyl diphosphate (GGPP) to give prephytoene diphosphate (PPPP) and the subsequent rearrangement of the cyclopropylcarbinyl intermediate to yield phytoene. This is Phytoene synthase (crtB) from Cereibacter sphaeroides (strain ATCC 17023 / DSM 158 / JCM 6121 / CCUG 31486 / LMG 2827 / NBRC 12203 / NCIMB 8253 / ATH 2.4.1.) (Rhodobacter sphaeroides).